Consider the following 399-residue polypeptide: Phosphoglycerate kinase (399 aa).

Residues 22–24 (DFN), R38, 61–64 (HLGR), R120, and R153 each bind substrate. Residues K204, E326, and 352 to 355 (GGDT) each bind ATP.

This sequence belongs to the phosphoglycerate kinase family. As to quaternary structure, monomer.

The protein resides in the cytoplasm. The catalysed reaction is (2R)-3-phosphoglycerate + ATP = (2R)-3-phospho-glyceroyl phosphate + ADP. Its pathway is carbohydrate degradation; glycolysis; pyruvate from D-glyceraldehyde 3-phosphate: step 2/5. The protein is Phosphoglycerate kinase of Pelobacter propionicus (strain DSM 2379 / NBRC 103807 / OttBd1).